Reading from the N-terminus, the 120-residue chain is Large ribosomal subunit protein uL14 (120 aa).

This sequence belongs to the universal ribosomal protein uL14 family. In terms of assembly, part of the 50S ribosomal subunit. Forms a cluster with proteins L3 and L19. In the 70S ribosome, L14 and L19 interact and together make contacts with the 16S rRNA in bridges B5 and B8.

Its function is as follows. Binds to 23S rRNA. Forms part of two intersubunit bridges in the 70S ribosome. The sequence is that of Large ribosomal subunit protein uL14 from Dictyoglomus thermophilum (strain ATCC 35947 / DSM 3960 / H-6-12).